Reading from the N-terminus, the 766-residue chain is Tripartite terminase subunit 1 (766 aa).

The C3H1-type zinc-finger motif lies at 191–219; that stretch reads CSVCFEELCVTANQGEAVHRRLLECTCDH. 683–690 lines the ATP pocket; the sequence is FSSVFHCG.

The protein belongs to the herpesviridae TRM1 protein family. In terms of assembly, associates with TRM2 and TRM3 to form the tripartite terminase complex. Interacts with portal protein.

It localises to the host nucleus. Component of the molecular motor that translocates viral genomic DNA in empty capsid during DNA packaging. Forms a tripartite terminase complex together with TRM2 and TRM3 in the host cytoplasm. Once the complex reaches the host nucleus, it interacts with the capsid portal vertex. This portal forms a ring in which genomic DNA is translocated into the capsid. TRM1 carries an endonuclease activity that plays an important role for the cleavage of concatemeric viral DNA into unit length genomes. This is Tripartite terminase subunit 1 from Equus caballus (Horse).